Reading from the N-terminus, the 448-residue chain is N-succinylarginine dihydrolase (448 aa).

Substrate contacts are provided by residues 19-28 (GGLSYGNVAS), Asn110, and 137-138 (HR). The active site involves Glu174. Arg214 lines the substrate pocket. Residue His250 is part of the active site. Positions 252 and 365 each coordinate substrate. The Nucleophile role is filled by Cys371.

The protein belongs to the succinylarginine dihydrolase family. As to quaternary structure, homodimer.

The catalysed reaction is N(2)-succinyl-L-arginine + 2 H2O + 2 H(+) = N(2)-succinyl-L-ornithine + 2 NH4(+) + CO2. It functions in the pathway amino-acid degradation; L-arginine degradation via AST pathway; L-glutamate and succinate from L-arginine: step 2/5. Functionally, catalyzes the hydrolysis of N(2)-succinylarginine into N(2)-succinylornithine, ammonia and CO(2). This is N-succinylarginine dihydrolase from Pseudomonas savastanoi pv. phaseolicola (strain 1448A / Race 6) (Pseudomonas syringae pv. phaseolicola (strain 1448A / Race 6)).